The sequence spans 261 residues: Short chain dehydrogenase/reductase astE (261 aa).

NADP(+) is bound by residues isoleucine 24, aspartate 70, asparagine 97, and lysine 131. Active-site proton donor residues include serine 150 and tyrosine 164. NADP(+) is bound by residues tyrosine 164, lysine 168, valine 197, and threonine 199. Lysine 168 serves as the catalytic Lowers pKa of active site Tyr.

Belongs to the short-chain dehydrogenases/reductases (SDR) family.

It functions in the pathway secondary metabolite biosynthesis; terpenoid biosynthesis. Short chain dehydrogenase/reductase; part of the gene cluster that mediates the biosynthesis of astellolides, drimane-type sesquiterpene esters that show antimicrobial, anti-inflammatory, and anti-tumor activities. The first step in astellolide biosynthesis is performed by the sesquiterpene cyclase astC that catalyzes the formation of drimanyl pyrophosphate from farnesyl pyrophosphate. Drimanyl pyrophosphate is then dephosphorylated by the sesquiterpene phosphatase astI to produce drimanyl monophosphate which is further dephosphorylated to drim-8-ene-11-ol by atsK. Drim-8-ene-11-ol is converted to confertifolin, probably by the cytochrome P450 monooxygenase astD and/or the dehydrogenase astE. The cytochrome P450 monooxygenases astB, astF and astJ then hydroxylate confertifolin at C6, C14, or C15 to form trihydroxy confertifolin. The nonribosomal peptide synthetase astA catalyzes ester bond formation between trihydroxy contifolin and benzoic acid (BA) or 4-hydroxy benzoic acid (4HBA), leading to the formation of dideacetyl astellolides A and B, respectively. Finally, the O-acetyltransferase astG converts dideacetyl astellolides A and B into deacetyl astellolides A and B. This chain is Short chain dehydrogenase/reductase astE, found in Aspergillus oryzae (strain ATCC 42149 / RIB 40) (Yellow koji mold).